Here is a 230-residue protein sequence, read N- to C-terminus: Ribonuclease 3 (230 aa).

Positions 5-134 constitute an RNase III domain; it reads EALLKSSFAI…FLGALLLDKG (130 aa). Glu47 is a Mg(2+) binding site. Asp51 is an active-site residue. Mg(2+) is bound by residues Asp120 and Glu123. Residue Glu123 is part of the active site. The 70-residue stretch at 160–229 folds into the DRBM domain; it reads DYKTSLQEIL…AENALKALSE (70 aa).

It belongs to the ribonuclease III family. In terms of assembly, homodimer. The cofactor is Mg(2+).

Its subcellular location is the cytoplasm. The catalysed reaction is Endonucleolytic cleavage to 5'-phosphomonoester.. Digests double-stranded RNA. Involved in the processing of primary rRNA transcript to yield the immediate precursors to the large and small rRNAs (23S and 16S). Processes some mRNAs, and tRNAs when they are encoded in the rRNA operon. Processes pre-crRNA and tracrRNA of type II CRISPR loci if present in the organism. This chain is Ribonuclease 3, found in Streptococcus uberis (strain ATCC BAA-854 / 0140J).